We begin with the raw amino-acid sequence, 259 residues long: DNA-directed RNA polymerase subunit Rpo3 (259 aa).

It belongs to the archaeal Rpo3/eukaryotic RPB3 RNA polymerase subunit family. As to quaternary structure, part of the RNA polymerase complex.

It localises to the cytoplasm. It catalyses the reaction RNA(n) + a ribonucleoside 5'-triphosphate = RNA(n+1) + diphosphate. In terms of biological role, DNA-dependent RNA polymerase (RNAP) catalyzes the transcription of DNA into RNA using the four ribonucleoside triphosphates as substrates. The protein is DNA-directed RNA polymerase subunit Rpo3 of Pyrococcus horikoshii (strain ATCC 700860 / DSM 12428 / JCM 9974 / NBRC 100139 / OT-3).